We begin with the raw amino-acid sequence, 275 residues long: NH(3)-dependent NAD(+) synthetase (275 aa).

Residue 46–53 coordinates ATP; that stretch reads GISGGQDS. Aspartate 52 provides a ligand contact to Mg(2+). Arginine 140 provides a ligand contact to deamido-NAD(+). Threonine 160 contributes to the ATP binding site. Glutamate 165 lines the Mg(2+) pocket. Deamido-NAD(+) is bound by residues lysine 173 and aspartate 180. ATP contacts are provided by lysine 189 and threonine 211. Position 260–261 (260–261) interacts with deamido-NAD(+); that stretch reads HK.

This sequence belongs to the NAD synthetase family. In terms of assembly, homodimer.

The enzyme catalyses deamido-NAD(+) + NH4(+) + ATP = AMP + diphosphate + NAD(+) + H(+). The protein operates within cofactor biosynthesis; NAD(+) biosynthesis; NAD(+) from deamido-NAD(+) (ammonia route): step 1/1. In terms of biological role, catalyzes the ATP-dependent amidation of deamido-NAD to form NAD. Uses ammonia as a nitrogen source. In Escherichia coli (strain K12 / MC4100 / BW2952), this protein is NH(3)-dependent NAD(+) synthetase.